The chain runs to 345 residues: Glycerol-3-phosphate dehydrogenase [NAD(P)+] (345 aa).

NADPH is bound by residues serine 23, tyrosine 24, histidine 44, and lysine 118. Positions 118, 147, and 149 each coordinate sn-glycerol 3-phosphate. Alanine 151 is an NADPH binding site. The sn-glycerol 3-phosphate site is built by lysine 203, aspartate 256, serine 266, arginine 267, and asparagine 268. The Proton acceptor role is filled by lysine 203. Arginine 267 provides a ligand contact to NADPH. NADPH is bound by residues valine 291 and glutamate 293.

It belongs to the NAD-dependent glycerol-3-phosphate dehydrogenase family.

The protein localises to the cytoplasm. The enzyme catalyses sn-glycerol 3-phosphate + NAD(+) = dihydroxyacetone phosphate + NADH + H(+). It carries out the reaction sn-glycerol 3-phosphate + NADP(+) = dihydroxyacetone phosphate + NADPH + H(+). It functions in the pathway membrane lipid metabolism; glycerophospholipid metabolism. In terms of biological role, catalyzes the reduction of the glycolytic intermediate dihydroxyacetone phosphate (DHAP) to sn-glycerol 3-phosphate (G3P), the key precursor for phospholipid synthesis. In Vibrio parahaemolyticus serotype O3:K6 (strain RIMD 2210633), this protein is Glycerol-3-phosphate dehydrogenase [NAD(P)+].